A 55-amino-acid chain; its full sequence is uncharacterized protein (55 aa).

This is an uncharacterized protein from Sulfolobus islandicus rod-shaped virus 1 (SIRV-1).